A 408-amino-acid chain; its full sequence is Peptidase T (408 aa).

H78 lines the Zn(2+) pocket. The active site involves D80. D140 is a Zn(2+) binding site. The active-site Proton acceptor is the E173. Zn(2+) contacts are provided by E174, D196, and H379.

This sequence belongs to the peptidase M20B family. Zn(2+) is required as a cofactor.

The protein resides in the cytoplasm. The catalysed reaction is Release of the N-terminal residue from a tripeptide.. Cleaves the N-terminal amino acid of tripeptides. This Escherichia coli (strain UTI89 / UPEC) protein is Peptidase T.